The sequence spans 206 residues: MNESGRVEAFSDGVFAIAITLLILDIKVPKADGPGGLWHALGAQWPSYAAYVVSFLVIGIMWVNHHQVFSYVARVDRALMFLNLLVLMVVAAVPWPTAMLAEYLREDRASHVAAAVYSLVMVAMALAFQALWWHLTRTGHLFDPRVDAPAARATRIRFALGSLGYPLTVGLAFVSAPLTLAAHGLLALYYGFNQVPVPTREAAAPS.

M1 is a topological domain (cytoplasmic). Residues 2-25 traverse the membrane as a helical segment; that stretch reads NESGRVEAFSDGVFAIAITLLILD. The RxxxFSD motif signature appears at 6-12; the sequence is RVEAFSD. Over 26–44 the chain is Extracellular; sequence IKVPKADGPGGLWHALGAQ. A short helix H1 region spans residues 31–34; that stretch reads ADGP. The segment at 36-42 is short helix H2; the sequence is GLWHALG. The chain crosses the membrane as a helical span at residues 45-70; sequence WPSYAAYVVSFLVIGIMWVNHHQVFS. At 71–76 the chain is on the cytoplasmic side; the sequence is YVARVD. The chain crosses the membrane as a helical span at residues 77-102; sequence RALMFLNLLVLMVVAAVPWPTAMLAE. Over 103 to 110 the chain is Extracellular; it reads YLREDRAS. A helical membrane pass occupies residues 111-135; sequence HVAAAVYSLVMVAMALAFQALWWHL. Residues 136 to 147 are Cytoplasmic-facing; that stretch reads TRTGHLFDPRVD. A helical membrane pass occupies residues 148-174; sequence APAARATRIRFALGSLGYPLTVGLAFV. The Extracellular segment spans residues 175–176; it reads SA. The helical transmembrane segment at 177 to 192 threads the bilayer; that stretch reads PLTLAAHGLLALYYGF. Residues 193 to 206 lie on the Cytoplasmic side of the membrane; the sequence is NQVPVPTREAAAPS.

Belongs to the TMEM175 family. Homotetramer.

The protein localises to the membrane. The enzyme catalyses K(+)(in) = K(+)(out). Functionally, potassium channel. This is Potassium channel B446_29190 from Streptomyces collinus (strain DSM 40733 / Tue 365).